The chain runs to 431 residues: tRNA(Ile)-lysidine synthase (431 aa).

25–30 (SGGLDS) is an ATP binding site.

This sequence belongs to the tRNA(Ile)-lysidine synthase family.

It is found in the cytoplasm. The enzyme catalyses cytidine(34) in tRNA(Ile2) + L-lysine + ATP = lysidine(34) in tRNA(Ile2) + AMP + diphosphate + H(+). In terms of biological role, ligates lysine onto the cytidine present at position 34 of the AUA codon-specific tRNA(Ile) that contains the anticodon CAU, in an ATP-dependent manner. Cytidine is converted to lysidine, thus changing the amino acid specificity of the tRNA from methionine to isoleucine. The sequence is that of tRNA(Ile)-lysidine synthase from Legionella pneumophila (strain Lens).